The primary structure comprises 718 residues: MRAVLDTADIAIVALYFILVMCIGFFAMWKSNRSTVSGYFLAGRSMTWVAIGASLFVSNIGSEHFIGLAGSGAASGFAVGAWEFNALLLLQLLGWVFIPIYIRSGVYTMPEYLSKRFGGHRIQVYFAALSLILYIFTKLSVDLYSGALFIQESLGWNLYVSVILLIGMTALLTVTGGLVAVIYTDTLQALLMIIGALTLMIISIMEIGGFEEVKRRYMLASPDVTSILLTYNLSNTNSCNVSPKKEALKMLRNPTDEDVPWPGFILGQTPASVWYWCADQVIVQRVLAAKNIAHAKGSTLMAGFLKLLPMFIIVVPGMISRILFTDDIACINPEHCMLVCGSRAGCSNIAYPRLVMKLVPVGLRGLMMAVMIAALMSDLDSIFNSASTIFTLDVYKLIRKSASSRELMIVGRIFVAFMVVISIAWVPIIVEMQGGQMYLYIQEVADYLTPPVAALFLLAIFWKRCNEQGAFYGGMAGFVLGAVRLILAFAYRAPECDQPDNRPGFIKDIHYMYVATGLFWVTGLITVIVSLLTPPPTKEQIRTTTFWSKKNLVVKENCSPKEEPYKMQEKSILRCSENNETINHIIPNGKSEDSIKGLQPEDVNLLVTCREEGNPVASLGHSEAETPVDAYSNGQAALMGEKERKKETDDGGRYWKFIDWFCGFKSKSLSKRSLRDLMEEEAVCLQMLEETRQVKVILNIGLFAVCSLGIFMFVYFSL.

Residues 1-9 (MRAVLDTAD) are Extracellular-facing. Residues 10 to 29 (IAIVALYFILVMCIGFFAMW) form a helical membrane-spanning segment. The Cytoplasmic portion of the chain corresponds to 30-38 (KSNRSTVSG). The helical transmembrane segment at 39–57 (YFLAGRSMTWVAIGASLFV) threads the bilayer. Over 58–86 (SNIGSEHFIGLAGSGAASGFAVGAWEFNA) the chain is Extracellular. A helical membrane pass occupies residues 87-110 (LLLLQLLGWVFIPIYIRSGVYTMP). The Cytoplasmic portion of the chain corresponds to 111-123 (EYLSKRFGGHRIQ). A helical transmembrane segment spans residues 124–144 (VYFAALSLILYIFTKLSVDLY). Over 145–157 (SGALFIQESLGWN) the chain is Extracellular. Residues 158 to 183 (LYVSVILLIGMTALLTVTGGLVAVIY) form a helical membrane-spanning segment. The Cytoplasmic portion of the chain corresponds to 184-186 (TDT). Residues 187-205 (LQALLMIIGALTLMIISIM) traverse the membrane as a helical segment. Over 206 to 303 (EIGGFEEVKR…HAKGSTLMAG (98 aa)) the chain is Extracellular. N-linked (GlcNAc...) asparagine glycosylation occurs at Asn-232. Residues 304–324 (FLKLLPMFIIVVPGMISRILF) traverse the membrane as a helical segment. At 325-353 (TDDIACINPEHCMLVCGSRAGCSNIAYPR) the chain is on the cytoplasmic side. The helical transmembrane segment at 354–376 (LVMKLVPVGLRGLMMAVMIAALM) threads the bilayer. Residues 377–406 (SDLDSIFNSASTIFTLDVYKLIRKSASSRE) lie on the Extracellular side of the membrane. Residues 407-430 (LMIVGRIFVAFMVVISIAWVPIIV) traverse the membrane as a helical segment. At 431–443 (EMQGGQMYLYIQE) the chain is on the cytoplasmic side. The helical transmembrane segment at 444 to 462 (VADYLTPPVAALFLLAIFW) threads the bilayer. Residues 463–510 (KRCNEQGAFYGGMAGFVLGAVRLILAFAYRAPECDQPDNRPGFIKDIH) lie on the Extracellular side of the membrane. Residues 511–532 (YMYVATGLFWVTGLITVIVSLL) traverse the membrane as a helical segment. Topologically, residues 533-695 (TPPPTKEQIR…QMLEETRQVK (163 aa)) are cytoplasmic. A phosphoserine mark is found at Ser-594 and Ser-632. Residues 696–716 (VILNIGLFAVCSLGIFMFVYF) form a helical membrane-spanning segment. The Extracellular segment spans residues 717-718 (SL).

It belongs to the sodium:solute symporter (SSF) (TC 2.A.21) family. In terms of assembly, interacts with KCNQ2 (via the pore module). Interacts with KCNQ1; this interaction is direct. Forms coregulatory complexes with ion channels KCNQ2-KCNQ3 and KCNQ1-KCNE2.

Its subcellular location is the apical cell membrane. It localises to the basolateral cell membrane. The catalysed reaction is myo-inositol(out) + 2 Na(+)(out) = myo-inositol(in) + 2 Na(+)(in). The enzyme catalyses scyllo-inositol(out) + 2 Na(+)(out) = scyllo-inositol(in) + 2 Na(+)(in). In terms of biological role, electrogenic Na(+)-coupled sugar symporter that actively transports myo-inositol and its stereoisomer scyllo-inositol across the plasma membrane, with a Na(+) to sugar coupling ratio of 2:1. Maintains myo-inositol concentration gradient that defines cell volume and fluid balance during osmotic stress, in particular in the fetoplacental unit and central nervous system. Forms coregulatory complexes with voltage-gated K(+) ion channels, allosterically altering ion selectivity, voltage dependence and gating kinetics of the channel. In turn, K(+) efflux through the channel forms a local electrical gradient that modulates electrogenic Na(+)-coupled myo-inositol influx through the transporter. Associates with KCNQ1-KCNE2 channel in the apical membrane of choroid plexus epithelium and regulates the myo-inositol gradient between blood and cerebrospinal fluid with an impact on neuron excitability. Associates with KCNQ2-KCNQ3 channel altering ion selectivity, increasing Na(+) and Cs(+) permeation relative to K(+) permeation. Provides myo-inositol precursor for biosynthesis of phosphoinositides such as PI(4,5)P2, thus indirectly affecting the activity of phosphoinositide-dependent ion channels and Ca(2+) signaling upon osmotic stress. In Homo sapiens (Human), this protein is Sodium/myo-inositol cotransporter.